Here is a 644-residue protein sequence, read N- to C-terminus: Arginine--tRNA ligase (644 aa).

Positions 134 to 144 (VNPTKPLHMGH) match the 'HIGH' region motif.

It belongs to the class-I aminoacyl-tRNA synthetase family.

Its subcellular location is the cytoplasm. The enzyme catalyses tRNA(Arg) + L-arginine + ATP = L-arginyl-tRNA(Arg) + AMP + diphosphate. The chain is Arginine--tRNA ligase from Thermococcus sibiricus (strain DSM 12597 / MM 739).